We begin with the raw amino-acid sequence, 203 residues long: Urease accessory protein UreG (203 aa).

14-21 (GPVGSGKT) contributes to the GTP binding site.

Belongs to the SIMIBI class G3E GTPase family. UreG subfamily. As to quaternary structure, homodimer. UreD, UreF and UreG form a complex that acts as a GTP-hydrolysis-dependent molecular chaperone, activating the urease apoprotein by helping to assemble the nickel containing metallocenter of UreC. The UreE protein probably delivers the nickel.

The protein resides in the cytoplasm. Its function is as follows. Facilitates the functional incorporation of the urease nickel metallocenter. This process requires GTP hydrolysis, probably effectuated by UreG. This is Urease accessory protein UreG from Rhizobium johnstonii (strain DSM 114642 / LMG 32736 / 3841) (Rhizobium leguminosarum bv. viciae).